The chain runs to 523 residues: Rho guanine nucleotide exchange factor 8 (523 aa).

A compositionally biased stretch (polar residues) spans 44–57 (VESNTPESQNSDSF). Disordered regions lie at residues 44 to 83 (VESN…ERQQ) and 442 to 523 (ETSD…KDRH). The 365-residue stretch at 76-440 (GKRSERQQAD…TLALKQTLLA (365 aa)) folds into the PRONE domain. The segment covering 465 to 475 (EAEKHDPHSKT) has biased composition (basic and acidic residues).

In terms of assembly, homodimer. The homodimer interacts with ARAC5/ROP4. Interacts with ARAC11/ROP1 and ARAC10/ROP11. Interacts with PRK6. As to expression, expressed in pollen grains and pollen tubes.

The protein resides in the cell membrane. In terms of biological role, guanine-nucleotide exchange factor (GEF) that acts as an activator of Rop (Rho of plants) GTPases by promoting the exchange of GDP for GTP. Active as homodimer. The polypeptide is Rho guanine nucleotide exchange factor 8 (Arabidopsis thaliana (Mouse-ear cress)).